The sequence spans 339 residues: Lipoyl synthase (339 aa).

The segment at 13–35 (RPKLDAPARPRHPEKAHRPDTAI) is disordered. [4Fe-4S] cluster contacts are provided by Cys-68, Cys-73, Cys-79, Cys-94, Cys-98, Cys-101, and Ser-307. One can recognise a Radical SAM core domain in the interval 80-296 (WEKRHATFMI…ETTAYAKGFL (217 aa)).

Belongs to the radical SAM superfamily. Lipoyl synthase family. It depends on [4Fe-4S] cluster as a cofactor.

It is found in the cytoplasm. It catalyses the reaction [[Fe-S] cluster scaffold protein carrying a second [4Fe-4S](2+) cluster] + N(6)-octanoyl-L-lysyl-[protein] + 2 oxidized [2Fe-2S]-[ferredoxin] + 2 S-adenosyl-L-methionine + 4 H(+) = [[Fe-S] cluster scaffold protein] + N(6)-[(R)-dihydrolipoyl]-L-lysyl-[protein] + 4 Fe(3+) + 2 hydrogen sulfide + 2 5'-deoxyadenosine + 2 L-methionine + 2 reduced [2Fe-2S]-[ferredoxin]. Its pathway is protein modification; protein lipoylation via endogenous pathway; protein N(6)-(lipoyl)lysine from octanoyl-[acyl-carrier-protein]: step 2/2. In terms of biological role, catalyzes the radical-mediated insertion of two sulfur atoms into the C-6 and C-8 positions of the octanoyl moiety bound to the lipoyl domains of lipoate-dependent enzymes, thereby converting the octanoylated domains into lipoylated derivatives. This chain is Lipoyl synthase, found in Methylorubrum extorquens (strain PA1) (Methylobacterium extorquens).